A 273-amino-acid polypeptide reads, in one-letter code: NADPH-dependent 7-cyano-7-deazaguanine reductase (273 aa).

A substrate-binding site is contributed by valine 81–serine 83. Serine 83–lysine 84 is an NADPH binding site. Cysteine 179 functions as the Thioimide intermediate in the catalytic mechanism. Residue aspartate 186 is the Proton donor of the active site. A substrate-binding site is contributed by alanine 218–glutamate 219. Residue arginine 247 to glycine 248 coordinates NADPH.

This sequence belongs to the GTP cyclohydrolase I family. QueF type 2 subfamily. Homodimer.

It is found in the cytoplasm. It catalyses the reaction 7-aminomethyl-7-carbaguanine + 2 NADP(+) = 7-cyano-7-deazaguanine + 2 NADPH + 3 H(+). It participates in tRNA modification; tRNA-queuosine biosynthesis. In terms of biological role, catalyzes the NADPH-dependent reduction of 7-cyano-7-deazaguanine (preQ0) to 7-aminomethyl-7-deazaguanine (preQ1). This Rickettsia felis (strain ATCC VR-1525 / URRWXCal2) (Rickettsia azadi) protein is NADPH-dependent 7-cyano-7-deazaguanine reductase.